The chain runs to 425 residues: Stabilizer of axonemal microtubules 4 (425 aa).

Disordered stretches follow at residues 259–297 (RGSD…YQPP) and 315–335 (NKEP…SYEQ). Residues 260 to 272 (GSDRDTGYSRVSE) show a composition bias toward basic and acidic residues. Over residues 277 to 290 (PRMPTPSSQPTSMS) the composition is skewed to low complexity. Polar residues predominate over residues 321 to 332 (FTLNNPSYVRSS).

In terms of assembly, microtubule inner protein component of sperm flagellar doublet microtubules. Interacts with PPP1CA. As to expression, expressed in brain, ovaries and testis. Expressed in the tracheal epithelium and in secondary spermatocytes and spermatids present in the seminiferous tubule. Expressed in ependymal cells lining the ventricular walls of the brain.

Its subcellular location is the cell projection. It is found in the cilium. The protein localises to the cytoplasm. The protein resides in the cytoskeleton. It localises to the flagellum axoneme. The chain is Stabilizer of axonemal microtubules 4 from Rattus norvegicus (Rat).